Here is a 308-residue protein sequence, read N- to C-terminus: Glutaminase (308 aa).

Residues serine 66, asparagine 117, glutamate 161, asparagine 168, tyrosine 192, tyrosine 244, and valine 262 each contribute to the substrate site.

Belongs to the glutaminase family. As to quaternary structure, homotetramer.

It carries out the reaction L-glutamine + H2O = L-glutamate + NH4(+). The protein is Glutaminase of Enterobacter sp. (strain 638).